The following is a 76-amino-acid chain: uncharacterized protein (76 aa).

Residues 24–44 (GAIFLVCYPLYCVVCFVSVLC) traverse the membrane as a helical segment.

Its subcellular location is the membrane. This is an uncharacterized protein from Schizosaccharomyces pombe (strain 972 / ATCC 24843) (Fission yeast).